The chain runs to 568 residues: Small ribosomal subunit protein bS1 (568 aa).

6 consecutive S1 motif domains span residues Lys39–Glu100, Gly118–Arg184, Gly205–Lys273, Gly290–Lys360, Gly377–Lys447, and Gly464–Lys533.

This sequence belongs to the bacterial ribosomal protein bS1 family.

In terms of biological role, binds mRNA; thus facilitating recognition of the initiation point. It is needed to translate mRNA with a short Shine-Dalgarno (SD) purine-rich sequence. In Rickettsia conorii (strain ATCC VR-613 / Malish 7), this protein is Small ribosomal subunit protein bS1 (rpsA).